The sequence spans 344 residues: Arginine N-succinyltransferase (344 aa).

Leu-125 contacts succinyl-CoA. His-229 (proton donor) is an active-site residue.

This sequence belongs to the arginine N-succinyltransferase family.

It catalyses the reaction succinyl-CoA + L-arginine = N(2)-succinyl-L-arginine + CoA + H(+). It participates in amino-acid degradation; L-arginine degradation via AST pathway; L-glutamate and succinate from L-arginine: step 1/5. Catalyzes the transfer of succinyl-CoA to arginine to produce N(2)-succinylarginine. The sequence is that of Arginine N-succinyltransferase from Enterobacter sp. (strain 638).